We begin with the raw amino-acid sequence, 142 residues long: MDVPEEVEKHIKITEEELSSAYLLLENGKLRDSISRAYYSMFHAAKALLLLKGIDPRKHSGVIRMFGLHFVNSGFIERVYAKYLTHSRSDQRLTMMSITNQVMRKLKTLLKVLSASWRELKVFWRRLKMDKKAQALNEFLKL.

It belongs to the UPF0332 family.

In Pyrococcus horikoshii (strain ATCC 700860 / DSM 12428 / JCM 9974 / NBRC 100139 / OT-3), this protein is UPF0332 protein PH1297.